Reading from the N-terminus, the 183-residue chain is CyanoP (183 aa).

The first 19 residues, 1 to 19 (MLQRFFATALAIFVVLLGG), serve as a signal peptide directing secretion. A lipid anchor (N-palmitoyl cysteine) is attached at Cys-20. Cys-20 carries the S-diacylglycerol cysteine lipid modification. Zn(2+)-binding residues include Asp-31, Asp-34, Asp-54, His-58, Thr-63, Glu-87, Asp-91, His-142, Glu-163, and Glu-164.

The protein belongs to the PsbP family. CyanoP subfamily. Monomer. Present in very small amounts in PSII. It depends on Zn(2+) as a cofactor.

The protein resides in the cellular thylakoid membrane. Its function is as follows. Plays a role in the early stages of photosystem II (PSII) assembly; binds to D2 (psbD) and may facilitate its incorporation into PSII. Present in less than 1% of PSII preparations. This Thermosynechococcus vestitus (strain NIES-2133 / IAM M-273 / BP-1) protein is CyanoP.